A 2238-amino-acid polypeptide reads, in one-letter code: Golgin subfamily A member 4 (2238 aa).

The tract at residues 1–90 (MFKKLKQKIS…QTFAQKLQLR (90 aa)) is disordered. At Ser10 the chain carries Phosphoserine. The span at 12–41 (EQQQLQQALAPAQASSSSSTPTRTRSRTSS) shows a compositional bias: low complexity. A Phosphothreonine modification is found at Thr39. Residue Ser41 is modified to Phosphoserine. Composition is skewed to polar residues over residues 52–62 (NRENASTQATK) and 73–85 (SPSQ…TFAQ). A phosphoserine mark is found at Ser93 and Ser100. Disordered stretches follow at residues 132 to 154 (AAAF…NSDG), 1695 to 1744 (LKER…SQDC), and 1770 to 1789 (LEQG…HRAL). An interaction with MACF1 region spans residues 154 to 224 (GLSREQLLQR…EELQMDQQAK (71 aa)). Residues 156-2161 (SREQLLQRLR…RYEKNACAAT (2006 aa)) adopt a coiled-coil conformation. Residues 1695–1711 (LKEREKQVHSLEDKLKN) are compositionally biased toward basic and acidic residues. A GRIP domain is found at 2178-2225 (LFGEPTEFEYLRKVMFEYMMGRETKTMAKVITTVLKFPDDQAQKILER).

Homodimer. Interacts with GTP-bound ARL1 and ARL3. Interacts with MACF1. Directly interacts with TBC1D23. Interacts with FAM91A1; this interaction may be mediated by TBC1D23. In terms of tissue distribution, ubiquitous. Highly expressed in oligodendrocyte precursors, particularly at a stage just prior to myelination.

Its subcellular location is the cytoplasm. The protein localises to the golgi apparatus membrane. It is found in the golgi apparatus. It localises to the trans-Golgi network membrane. Functionally, involved in vesicular trafficking at the Golgi apparatus level. May play a role in delivery of transport vesicles containing GPI-linked proteins from the trans-Golgi network through its interaction with MACF1. Involved in endosome-to-Golgi trafficking. The chain is Golgin subfamily A member 4 (Golga4) from Mus musculus (Mouse).